We begin with the raw amino-acid sequence, 312 residues long: D-alanine--D-alanine ligase (312 aa).

Positions 102–307 constitute an ATP-grasp domain; sequence KKIFKMEGIP…FPELTDRLIK (206 aa). 136 to 191 is a binding site for ATP; it reads IKEVGVPAVVKANTQGSTIGITFVHVKEKMAEAIESALKYDQDVLVEQFVAGTEVT. 3 residues coordinate Mg(2+): Asp-262, Glu-274, and Asn-276.

Belongs to the D-alanine--D-alanine ligase family. Mg(2+) serves as cofactor. The cofactor is Mn(2+).

The protein resides in the cytoplasm. The catalysed reaction is 2 D-alanine + ATP = D-alanyl-D-alanine + ADP + phosphate + H(+). Its pathway is cell wall biogenesis; peptidoglycan biosynthesis. In terms of biological role, cell wall formation. The polypeptide is D-alanine--D-alanine ligase (Desulforamulus reducens (strain ATCC BAA-1160 / DSM 100696 / MI-1) (Desulfotomaculum reducens)).